A 225-amino-acid polypeptide reads, in one-letter code: Ribonuclease 3 (225 aa).

Residues 4 to 133 (FEKLETLLGY…LIAAIYLDSN (130 aa)) enclose the RNase III domain. Glu-46 is a Mg(2+) binding site. The active site involves Asp-50. 2 residues coordinate Mg(2+): Asn-119 and Glu-122. Glu-122 is an active-site residue. Residues 158–225 (DPKTALQEWA…AARSLLHRLK (68 aa)) form the DRBM domain.

It belongs to the ribonuclease III family. As to quaternary structure, homodimer. The cofactor is Mg(2+).

Its subcellular location is the cytoplasm. It catalyses the reaction Endonucleolytic cleavage to 5'-phosphomonoester.. Digests double-stranded RNA. Involved in the processing of primary rRNA transcript to yield the immediate precursors to the large and small rRNAs (23S and 16S). Processes some mRNAs, and tRNAs when they are encoded in the rRNA operon. Processes pre-crRNA and tracrRNA of type II CRISPR loci if present in the organism. The polypeptide is Ribonuclease 3 (Rickettsia prowazekii (strain Madrid E)).